The primary structure comprises 278 residues: MEMLEEHRCFEGWQQRWRHDSSTLNCPMTFSIFLPPPRDHTPPPVLYWLSGLTCNDENFTTKAGAQRVAAELGIVLVMPDTSPRGEQVANDDGYDLGQGAGFYLNATQPPWATHYRMYDYLRDELPALVQSQFNVSDRCAISGHSMGGHGALIMALKNPGKYTSVSAFAPIVNPCSVPWGIKAFSTYLGEDKNAWLEWDSCALMYASNAQDAIPTLIDQGDNDQFLADQLQPAVLAEAARQKAWPMTLRIQPGYDHSYYFIASFIEDHLRFHAQYLLK.

Residues serine 145, aspartate 223, and histidine 256 each act as charge relay system in the active site.

This sequence belongs to the esterase D family.

The enzyme catalyses S-formylglutathione + H2O = formate + glutathione + H(+). Serine hydrolase involved in the detoxification of formaldehyde. Hydrolyzes S-formylglutathione to glutathione and formate. The polypeptide is S-formylglutathione hydrolase YeiG (yeiG) (Escherichia coli O6:K15:H31 (strain 536 / UPEC)).